A 121-amino-acid chain; its full sequence is Small ribosomal subunit protein uS13 (121 aa).

Positions 90 to 121 (RHRHGLPVRGQHTKNNARTRKGKAVAIAGKKK) are disordered.

This sequence belongs to the universal ribosomal protein uS13 family. Part of the 30S ribosomal subunit. Forms a loose heterodimer with protein S19. Forms two bridges to the 50S subunit in the 70S ribosome.

Located at the top of the head of the 30S subunit, it contacts several helices of the 16S rRNA. In the 70S ribosome it contacts the 23S rRNA (bridge B1a) and protein L5 of the 50S subunit (bridge B1b), connecting the 2 subunits; these bridges are implicated in subunit movement. Contacts the tRNAs in the A and P-sites. The sequence is that of Small ribosomal subunit protein uS13 from Limosilactobacillus fermentum (strain NBRC 3956 / LMG 18251) (Lactobacillus fermentum).